A 381-amino-acid chain; its full sequence is L-lactate dehydrogenase (381 aa).

The 380-residue stretch at 1–380 folds into the FMN hydroxy acid dehydrogenase domain; it reads MIISASTDYR…TRDSLVRELG (380 aa). Tyr-24 provides a ligand contact to substrate. Residues Ser-106 and Gln-127 each contribute to the FMN site. Residue Tyr-129 coordinates substrate. Thr-155 contributes to the FMN binding site. Arg-164 lines the substrate pocket. Residue Lys-251 coordinates FMN. His-275 acts as the Proton acceptor in catalysis. Arg-278 contributes to the substrate binding site. 306 to 330 is an FMN binding site; the sequence is DSGIRSGLDVVRMIALGADTVLIGR.

Belongs to the FMN-dependent alpha-hydroxy acid dehydrogenase family. In terms of assembly, homotetramer. FMN is required as a cofactor.

The protein localises to the cell inner membrane. The enzyme catalyses (S)-lactate + A = pyruvate + AH2. Its function is as follows. Catalyzes the conversion of L-lactate to pyruvate. Is coupled to the respiratory chain. The protein is L-lactate dehydrogenase of Pseudomonas entomophila (strain L48).